Here is a 1379-residue protein sequence, read N- to C-terminus: MAQTFLGQKRLRKYYGKIREVLDMPNLIEVQKSSYDLFLRSGDAPQPLDGEGIKGVFQSVFPIKDFNETSVLEFVNYALERPKYDVDECMQRDMTYSAPLKVTLRLIVFDVDEDTGAKSVKDIKEQDVFMGDMPLMTPNGTFIVNGTERVIVSQMHRSPGVFFDHDKGKTHSSGKLLFACRIIPYRGSWLDFEFDAKDIVFARIDRRRKLPVTTLLYALGLDQEGIMDAYYNTVNFKLEKSRGWVTPFFPERVRGTRPTYDLVDAATGEIICEAGKKVTPRAVKKMIDEGNITELLVPFEHIVGKYVAKDIINEENGAIYVEAGDELTLEYDKDGDIIGGSVKELLDAGITDIPVLDIDNVNVGPYMRNTMAQDKNMSRETALMDIYRVMRPGEPPTVEAASALFDTLFFDSERYDLSAVGRVKMNMRLALDAEDTQRTLRKEDIVACIKALVELRDGKGDVDDIDHLGNRRVRSVGELMENQYRVGLLRMERAIKERMSSVEIDTVMPQDLINAKPAAAAVREFFGSSQLSQFMDQTNPLSEVTHKRRLSALGPGGLTRERAGFEVRDVHPTHYGRMCPIETPEGPNIGLINSLATFARVNKYGFIETPYRVVKDGQVTDEVHYMSATEEMRHTVAQANANLDEDNRFVNDLVSTRQSGDYTLAPNESVDLIDVSPKQLVSVAASLIPFLENDDANRALMGSNMQRQAVPLLRAEAPLVGTGIEEIVARDSGAAIMAKRAGVIDQIDAQRIVIRATSDLELGDAGVDIYRMRKFQRSNQNTCINQRPLVKVGQTVEKGEVIADGPSTDMGELALGKNVVVAFMPWNGYNYEDSILISERIARDDVFTSIHIEEFEVAARDTKLGPEEITRDIPNVGEEALRNLDEAGIVYIGADVEPGDILVGKITPKGESPMTPEEKLLRAIFGEKASDVRDTSLRVKPGDYGTVVEVRVFNRHGVEKDERALQIEREEVERLARDRDDELGILDRNIYARLRDLLLGKTAVKGPKGVRGNTVIDEDLLDNQLTRGQWWMLALEEEQDAQILEALNEQYEAQKRALDARFEDKVEKVRRGDDLPPGVMKMVKVFIAVKRKLQPGDKMAGRHGNKGVISRVVPMEDMPFLADGTPVDFCLNPLGVPSRMNVGQILETHMGWAARGLGLKIDDALQDYRRTGDLTPVRDAMREAYGEDVYEEGISSMDETQLIEAAGNVTRGVPIATPVFDGAKEDDVNDALVRAGFDQSGQSILFDGRTGEQFARPVTVGIKYLLKLHHLVDDKIHARSTGPYSLVTQQPLGGKAQFGGQRFGEMEVWALEAYGAAYTLQEMLTVKSDDVAGRTKVYESIVKGEDNFEAGVPESFNVLVKEVRGLGLNMELLDAEVEE.

This sequence belongs to the RNA polymerase beta chain family. In terms of assembly, the RNAP catalytic core consists of 2 alpha, 1 beta, 1 beta' and 1 omega subunit. When a sigma factor is associated with the core the holoenzyme is formed, which can initiate transcription.

The catalysed reaction is RNA(n) + a ribonucleoside 5'-triphosphate = RNA(n+1) + diphosphate. Functionally, DNA-dependent RNA polymerase catalyzes the transcription of DNA into RNA using the four ribonucleoside triphosphates as substrates. This Ruegeria sp. (strain TM1040) (Silicibacter sp.) protein is DNA-directed RNA polymerase subunit beta.